Consider the following 574-residue polypeptide: GRB2-associated-binding protein 4 (574 aa).

Residues 1 to 33 (MSLPSPSPSRELCPPDPAFAPLSSWPGSGPAGG) form a disordered region. Residues 39–152 (HVLYSGWLRK…WVQSICQICG (114 aa)) enclose the PH domain. Disordered regions lie at residues 176–200 (PAEPSCSHQHLPQEQEPTSEPPVSH), 215–234 (LRSHQHASQRAEHARSASFS), 293–331 (SLASHGHTRGSLTGSEADNEASSGKYTQHGGGNASRPAE), and 418–513 (PPVN…PRST). Polar residues predominate over residues 181-193 (CSHQHLPQEQEPT). 2 stretches are compositionally biased toward polar residues: residues 302–318 (GSLTGSEADNEASSGKY) and 424–442 (LKPNQKANPTPPNLRNNRV). Positions 457–478 (SGTSHTFDSSSSQHPISTQSIT) are enriched in low complexity. The span at 502 to 513 (GGTSSSAPPRST) shows a compositional bias: polar residues.

This sequence belongs to the GAB family.

This chain is GRB2-associated-binding protein 4 (GAB4), found in Homo sapiens (Human).